The following is a 448-amino-acid chain: Glutamyl-tRNA reductase (448 aa).

Substrate is bound by residues Thr-49 to Arg-52, Ser-109, Glu-114 to Gln-116, and Gln-120. The Nucleophile role is filled by Cys-50. Gly-189–Ser-194 is an NADP(+) binding site.

The protein belongs to the glutamyl-tRNA reductase family. As to quaternary structure, homodimer.

The catalysed reaction is (S)-4-amino-5-oxopentanoate + tRNA(Glu) + NADP(+) = L-glutamyl-tRNA(Glu) + NADPH + H(+). The protein operates within porphyrin-containing compound metabolism; protoporphyrin-IX biosynthesis; 5-aminolevulinate from L-glutamyl-tRNA(Glu): step 1/2. Its function is as follows. Catalyzes the NADPH-dependent reduction of glutamyl-tRNA(Glu) to glutamate 1-semialdehyde (GSA). This is Glutamyl-tRNA reductase from Staphylococcus aureus (strain NCTC 8325 / PS 47).